The primary structure comprises 358 residues: Fructose-bisphosphate aldolase 1, cytoplasmic (358 aa).

Substrate is bound at residue Arg39. The Proton acceptor role is filled by Glu183. Residue Lys225 is the Schiff-base intermediate with dihydroxyacetone-P of the active site. Substrate contacts are provided by residues 266 to 268 (SGG) and Arg298.

The protein belongs to the class I fructose-bisphosphate aldolase family. Homotetramer. Expressed in callus.

The protein resides in the cytoplasm. The protein localises to the cytosol. The enzyme catalyses beta-D-fructose 1,6-bisphosphate = D-glyceraldehyde 3-phosphate + dihydroxyacetone phosphate. The protein operates within carbohydrate degradation; glycolysis; D-glyceraldehyde 3-phosphate and glycerone phosphate from D-glucose: step 4/4. Its function is as follows. Fructose-bisphosphate aldolase that plays a key role in glycolysis and gluconeogenesis. Involved in gibberellin-mediated root growth. May be regulated by CDPK13. Associates with vacuolar proton ATPase (V-ATPase) and may regulate the V-ATPase-mediated control of root cell elongation. This chain is Fructose-bisphosphate aldolase 1, cytoplasmic, found in Oryza sativa subsp. japonica (Rice).